A 71-amino-acid chain; its full sequence is ATP synthase F(0) complex subunit e, mitochondrial (71 aa).

Lys34 is modified (N6-acetyllysine). Ser68 bears the Phosphoserine mark.

It belongs to the ATPase e subunit family. In terms of assembly, component of the ATP synthase complex composed at least of ATP5F1A/subunit alpha, ATP5F1B/subunit beta, ATP5MC1/subunit c (homooctomer), MT-ATP6/subunit a, MT-ATP8/subunit 8, ATP5ME/subunit e, ATP5MF/subunit f, ATP5MG/subunit g, ATP5MK/subunit k, ATP5MJ/subunit j, ATP5F1C/subunit gamma, ATP5F1D/subunit delta, ATP5F1E/subunit epsilon, ATP5PF/subunit F6, ATP5PB/subunit b, ATP5PD/subunit d, ATP5PO/subunit OSCP. ATP synthase complex consists of a soluble F(1) head domain (subunits alpha(3) and beta(3)) - the catalytic core - and a membrane F(0) domain - the membrane proton channel (subunits c, a, 8, e, f, g, k and j). These two domains are linked by a central stalk (subunits gamma, delta, and epsilon) rotating inside the F1 region and a stationary peripheral stalk (subunits F6, b, d, and OSCP).

It is found in the mitochondrion. Its subcellular location is the mitochondrion inner membrane. Functionally, subunit e, of the mitochondrial membrane ATP synthase complex (F(1)F(0) ATP synthase or Complex V) that produces ATP from ADP in the presence of a proton gradient across the membrane which is generated by electron transport complexes of the respiratory chain. ATP synthase complex consist of a soluble F(1) head domain - the catalytic core - and a membrane F(1) domain - the membrane proton channel. These two domains are linked by a central stalk rotating inside the F(1) region and a stationary peripheral stalk. During catalysis, ATP synthesis in the catalytic domain of F(1) is coupled via a rotary mechanism of the central stalk subunits to proton translocation. In vivo, can only synthesize ATP although its ATP hydrolase activity can be activated artificially in vitro. Part of the complex F(0) domain. The protein is ATP synthase F(0) complex subunit e, mitochondrial of Pongo abelii (Sumatran orangutan).